The primary structure comprises 76 residues: Toxin Acra III-2 (76 aa).

The LCN-type CS-alpha/beta domain occupies 3 to 67 (VPGNYPLNTY…IWDAVKNHCT (65 aa)). 3 cysteine pairs are disulfide-bonded: cysteine 18/cysteine 41, cysteine 27/cysteine 46, and cysteine 31/cysteine 48.

This sequence belongs to the long (3 C-C) scorpion toxin superfamily. Sodium channel inhibitor family. Beta subfamily. Expressed by the venom gland.

It localises to the secreted. Binds to sodium channels (Nav) and affects the channel activation process. The protein is Toxin Acra III-2 of Androctonus crassicauda (Arabian fat-tailed scorpion).